A 2448-amino-acid chain; its full sequence is Cysteine repeat modular protein 1 (2448 aa).

A helical transmembrane segment spans residues 9 to 29; it reads TSTNLLNIFALYFSAICFIYC. Residues N48, N89, N248, N284, N461, N503, N542, N598, and N619 are each glycosylated (N-linked (GlcNAc...) asparagine). 4 FU repeats span residues 431 to 481, 485 to 530, 535 to 566, and 567 to 611; these read KNTC…GYYF, FMQC…GFYI, NFKC…FYLS, and SNTC…GQFA. 10 FU repeats span residues 645 to 694, 698 to 727, 728 to 772, 775 to 813, 819 to 868, 904 to 947, 950 to 983, 984 to 1027, 1063 to 1109, and 1113 to 1144; these read NNQC…GYFP, TSVC…YYLQ, DSNC…GTFG, QNIC…ITNN, KGMC…YYLS, GRVC…GFPD, QNVC…LNPA, NNIC…RTYP, QGAC…NQYV, and QNRC…GFYL. N761 and N812 each carry an N-linked (GlcNAc...) asparagine glycan. N934 carries N-linked (GlcNAc...) asparagine glycosylation. The N-linked (GlcNAc...) asparagine glycan is linked to N1002. N-linked (GlcNAc...) asparagine glycosylation is present at N1146. One copy of the FU 15 repeat lies at 1147-1193; it reads QTQCSICDISCLQCSGPGFDSCIQCAQGYYKLGDSVCVQSCPDGFFL. An N-linked (GlcNAc...) asparagine glycan is attached at N1194. 5 FU repeats span residues 1197-1232, 1234-1279, 1281-1332, 1346-1394, and 1402-1436; these read NNQC…ISNQ, GIIC…GYRS, KGVC…GTFQ, SYYC…GFIL, and NQYC…GTVQ. 3 N-linked (GlcNAc...) asparagine glycosylation sites follow: N1296, N1328, and N1365. N-linked (GlcNAc...) asparagine glycosylation is found at N1506, N1601, N1628, and N1670. Positions 1739–1773 constitute an EGF-like domain; the sequence is SDISCSLNLCMNSGKCVPNSIFCSCPSAFTGPKCQ. Disulfide bonds link C1743-C1754, C1748-C1761, and C1763-C1772. Residues N1800, N1849, N1877, N1942, N2117, N2155, and N2179 are each glycosylated (N-linked (GlcNAc...) asparagine). Helical transmembrane passes span 2201 to 2221 and 2238 to 2258; these read LYIM…YSAI and IYFL…NQFV. N2260 is a glycosylation site (N-linked (GlcNAc...) asparagine). 4 helical membrane passes run 2267 to 2287, 2296 to 2316, 2352 to 2372, and 2386 to 2406; these read SLTI…ILPF, ILTS…TIGV, MIGL…IGLC, and AVFL…IIVG.

Its subcellular location is the membrane. Its function is as follows. Required for mucocyst secretion. The chain is Cysteine repeat modular protein 1 from Tetrahymena thermophila (strain SB210).